We begin with the raw amino-acid sequence, 743 residues long: DEAD-box ATP-dependent RNA helicase 3B, chloroplastic (743 aa).

Residues 1-37 (MASLTLPALALALSNPGAVRLRAAAFRCWALRRRGWA) constitute a chloroplast transit peptide. The disordered stretch occupies residues 60–79 (GSDDEDGEGPYGSDADEGFE). Over residues 61–79 (SDDEDGEGPYGSDADEGFE) the composition is skewed to acidic residues. Positions 88 to 116 (LAIARLGLPDELVATLEKRGITHLFPIQR) match the Q motif motif. The Helicase ATP-binding domain maps to 119–295 (LIPALEGRDL…RRYLNNPLTI (177 aa)). 132–139 (AKTGTGKT) is a binding site for ATP. A DEAD box motif is present at residues 243-246 (DEAD). Positions 324-469 (VLSDLITVYA…ISPPSIEEVL (146 aa)) constitute a Helicase C-terminal domain. A disordered region spans residues 606–719 (LTKISKLPAL…RSSSFGGRES (114 aa)). A compositionally biased stretch (gly residues) spans 642–653 (GGGASRGRGGWD). Residues 657-671 (EDRFRRGGRSLRSDN) show a composition bias toward basic and acidic residues. Low complexity predominate over residues 688–719 (RSSSFGSRSSSYSSRGSPSFGGRSSSFGGRES). The segment at 725–742 (GACFNCGESGHRATDCPN) adopts a CCHC-type zinc-finger fold.

It belongs to the DEAD box helicase family. DDX21/DDX50 subfamily.

It localises to the plastid. The protein localises to the chloroplast stroma. The enzyme catalyses ATP + H2O = ADP + phosphate + H(+). In terms of biological role, nuclear genome-encoded factor involved in ribosome biogenesis in chloroplasts. Binds specific group II introns in chloroplasts and facilitates their splicing. Is required for rRNA maturation in plastids and may contribute to the assembly of the large (50S) ribosomal subunit. Required for normal development of chloroplasts. This is DEAD-box ATP-dependent RNA helicase 3B, chloroplastic from Zea mays (Maize).